Consider the following 628-residue polypeptide: Voltage-gated potassium channel KCNC4 (628 aa).

2 disordered regions span residues 1-24 and 62-88; these read MISSVCVSSYRGRKSGNKPPSKTC and LAWLADPDGGGRPESDGGGAGSSGSSG. The segment at 1 to 28 is inactivation gate; that stretch reads MISSVCVSSYRGRKSGNKPPSKTCLKEE. At 1-230 the chain is on the cytoplasmic side; the sequence is MISSVCVSSY…EDPYSSRAAR (230 aa). Residues S8, S9, S15, and S21 each carry the phosphoserine modification. The segment covering 77–88 has biased composition (gly residues); it reads DGGGAGSSGSSG. Positions 120, 126, 147, and 148 each coordinate Zn(2+). A helical membrane pass occupies residues 231–251; it reads VVAFASLFFILVSITTFCLET. Residues N260 and N269 are each glycosylated (N-linked (GlcNAc...) asparagine). The helical transmembrane segment at 282 to 302 threads the bilayer; sequence EPILTYIEGVCVMWFTLEFLV. At 303–316 the chain is on the cytoplasmic side; sequence RIVCCPDTLDFVKN. The chain crosses the membrane as a helical span at residues 317–337; the sequence is LLNIIDFVAILPFYLEVGLSG. Residues 349–368 traverse the membrane as a helical; Voltage-sensor segment; the sequence is FLRVVRFVRILRIFKLTRHF. Over 369–384 the chain is Cytoplasmic; it reads VGLRVLGHTLRASTNE. Residues 385–405 traverse the membrane as a helical segment; the sequence is FLLLIIFLALGVLIFATMIYY. T440, L441, G442, and Y443 together coordinate K(+). Residues 440 to 445 carry the Selectivity filter motif; the sequence is TLGYGD. The helical transmembrane segment at 456–476 threads the bilayer; that stretch reads VGALCALAGVLTIAMPVPVIV. Residues 477–628 lie on the Cytoplasmic side of the membrane; sequence NNFGMYYSLA…CVPVSHTCAL (152 aa). Positions 493–584 are disordered; that stretch reads PKKRKKHVPR…RRALRRSGTR (92 aa). Residues 531 to 546 are compositionally biased toward basic and acidic residues; sequence AREEGVVERKRADSKQ.

The protein belongs to the potassium channel family. C (Shaw) (TC 1.A.1.2) subfamily. Kv3.4/KCNC4 sub-subfamily. Homotetramer. Heterotetramer of potassium channel proteins. Phosphorylation of serine residues in the inactivation gate inhibits rapid channel closure.

The protein resides in the membrane. It carries out the reaction K(+)(in) = K(+)(out). Voltage-gated potassium channel that opens in response to the voltage difference across the membrane, forming a potassium-selective channel through which potassium ions pass in accordance with their electrochemical gradient. The channel displays rapid activation and inactivation kinetics. The chain is Voltage-gated potassium channel KCNC4 from Mus musculus (Mouse).